We begin with the raw amino-acid sequence, 341 residues long: Geranylfarnesyl diphosphate synthase (341 aa).

Residues Lys47, Arg50, and Gln95 each contribute to the isopentenyl diphosphate site. Residues Asp102 and Asp106 each contribute to the Mg(2+) site. An all-trans-polyprenyl diphosphate is bound at residue Arg111. Arg112 lines the isopentenyl diphosphate pocket. Positions 193, 194, and 231 each coordinate an all-trans-polyprenyl diphosphate.

The protein belongs to the FPP/GGPP synthase family. As to quaternary structure, homodimer. Mg(2+) is required as a cofactor.

It is found in the cytoplasm. The catalysed reaction is isopentenyl diphosphate + (2E,6E,10E)-geranylgeranyl diphosphate = (2E,6E,10E,14E)-geranylfarnesyl diphosphate + diphosphate. In terms of biological role, probably involved in biosynthesis of the precursor for C25 (sesterterpanyl chain) moiety of C20-C25 diether (2-O-sesterterpanyl-3-O-phytanyl-sn-glycer) membrane lipid. Catalyzes the condensation of isopentenyl pyrophosphate with the allylic pyrophosphates to yield geranylfarnesyl diphosphate (GFPP). Geranylgeranyl diphosphate (GGPP) is the preferred substrate, but dimethylallyl diphosphate (DMAPP) and farnesyl diphosphate (FPP) can also be used as allylic substrate. The protein is Geranylfarnesyl diphosphate synthase (idsA3) of Natronomonas pharaonis (strain ATCC 35678 / DSM 2160 / CIP 103997 / JCM 8858 / NBRC 14720 / NCIMB 2260 / Gabara) (Halobacterium pharaonis).